The chain runs to 353 residues: Thiamine-phosphate synthase (353 aa).

Residues 1-128 are unknown; it reads MESMPVAPST…ARTAAAVRYA (128 aa). The thiamine-phosphate synthase stretch occupies residues 129 to 353; the sequence is LYDHEVRILE…ASRQLLDLLT (225 aa). 4-amino-2-methyl-5-(diphosphooxymethyl)pyrimidine-binding positions include 185–189 and asparagine 217; that span reads QYRRK. Aspartate 218 and aspartate 237 together coordinate Mg(2+). 4-amino-2-methyl-5-(diphosphooxymethyl)pyrimidine is bound at residue serine 256. A 2-[(2R,5Z)-2-carboxy-4-methylthiazol-5(2H)-ylidene]ethyl phosphate-binding site is contributed by 282 to 284; it reads TAT. 4-amino-2-methyl-5-(diphosphooxymethyl)pyrimidine is bound at residue lysine 285. 2-[(2R,5Z)-2-carboxy-4-methylthiazol-5(2H)-ylidene]ethyl phosphate contacts are provided by residues glycine 312 and 332-333; that span reads VS.

This sequence belongs to the thiamine-phosphate synthase family. Mg(2+) is required as a cofactor.

The catalysed reaction is 2-[(2R,5Z)-2-carboxy-4-methylthiazol-5(2H)-ylidene]ethyl phosphate + 4-amino-2-methyl-5-(diphosphooxymethyl)pyrimidine + 2 H(+) = thiamine phosphate + CO2 + diphosphate. It catalyses the reaction 2-(2-carboxy-4-methylthiazol-5-yl)ethyl phosphate + 4-amino-2-methyl-5-(diphosphooxymethyl)pyrimidine + 2 H(+) = thiamine phosphate + CO2 + diphosphate. It carries out the reaction 4-methyl-5-(2-phosphooxyethyl)-thiazole + 4-amino-2-methyl-5-(diphosphooxymethyl)pyrimidine + H(+) = thiamine phosphate + diphosphate. It functions in the pathway cofactor biosynthesis; thiamine diphosphate biosynthesis; thiamine phosphate from 4-amino-2-methyl-5-diphosphomethylpyrimidine and 4-methyl-5-(2-phosphoethyl)-thiazole: step 1/1. Functionally, condenses 4-methyl-5-(beta-hydroxyethyl)thiazole monophosphate (THZ-P) and 2-methyl-4-amino-5-hydroxymethyl pyrimidine pyrophosphate (HMP-PP) to form thiamine monophosphate (TMP). The sequence is that of Thiamine-phosphate synthase from Synechococcus sp. (strain WH7803).